A 106-amino-acid chain; its full sequence is PTS system N,N'-diacetylchitobiose-specific EIIB component (106 aa).

One can recognise a PTS EIIB type-3 domain in the interval 3–106; the sequence is KKHIYLFCSA…VAAIKKAAAN (104 aa). Cys10 acts as the Phosphocysteine intermediate in catalysis. Cys10 is modified (phosphocysteine; by EIIA).

In terms of assembly, forms a complex with ChbA (EIIA). ChbB is a monomer in both its unphosphorylated and phosphorylated forms.

The protein localises to the cytoplasm. The catalysed reaction is N,N'-diacetylchitobiose(out) + N(pros)-phospho-L-histidyl-[protein] = diacetylchitobiose-6'-phosphate(in) + L-histidyl-[protein]. Functionally, the phosphoenolpyruvate-dependent sugar phosphotransferase system (sugar PTS), a major carbohydrate active transport system, catalyzes the phosphorylation of incoming sugar substrates concomitantly with their translocation across the cell membrane. The enzyme II ChbABC PTS system is involved in the transport of the chitin disaccharide N,N'-diacetylchitobiose (GlcNAc2). This chain is PTS system N,N'-diacetylchitobiose-specific EIIB component (chbB), found in Escherichia coli O157:H7.